A 620-amino-acid polypeptide reads, in one-letter code: Glutathione-regulated potassium-efflux system protein KefC (620 aa).

A run of 12 helical transmembrane segments spans residues 4-24, 26-46, 54-74, 86-106, 114-134, 149-169, 178-198, 218-238, 271-291, 296-316, 326-346, and 359-379; these read HTLI…PVAV, LGLG…PWGL, AILH…GLEL, VFGG…GFCV, VALL…MQAM, FAVL…IPLL, ASAF…VVLL, VFSA…EEAG, LLLG…TLVA, VLTL…LVAK, RWFA…FGAA, and ALTL…VLLT. Positions 399-518 constitute an RCK N-terminal domain; sequence QPRVIIAGFG…AGVAQPERET (120 aa). Residues 596-620 are disordered; the sequence is HGWQGTREGKHTGNDADEPEVKPQP.

This sequence belongs to the monovalent cation:proton antiporter 2 (CPA2) transporter (TC 2.A.37) family. KefC subfamily. Homodimer. Interacts with the regulatory subunit KefF.

It is found in the cell inner membrane. In terms of biological role, pore-forming subunit of a potassium efflux system that confers protection against electrophiles. Catalyzes K(+)/H(+) antiport. The chain is Glutathione-regulated potassium-efflux system protein KefC from Cronobacter sakazakii (strain ATCC BAA-894) (Enterobacter sakazakii).